The primary structure comprises 214 residues: Large ribosomal subunit protein uL3 (214 aa).

The interval 131–155 (GAQRTSHGNSRSHRVPGSIGMAQDP) is disordered. An N5-methylglutamine modification is found at Q153.

This sequence belongs to the universal ribosomal protein uL3 family. In terms of assembly, part of the 50S ribosomal subunit. Forms a cluster with proteins L14 and L19. In terms of processing, methylated by PrmB.

Its function is as follows. One of the primary rRNA binding proteins, it binds directly near the 3'-end of the 23S rRNA, where it nucleates assembly of the 50S subunit. This chain is Large ribosomal subunit protein uL3, found in Neisseria gonorrhoeae (strain ATCC 700825 / FA 1090).